A 129-amino-acid polypeptide reads, in one-letter code: Modulator protein MzrA (129 aa).

At 1–14 (MINFRGRFGRPLWH) the chain is on the cytoplasmic side. Residues 15–35 (YLVLPVVLLLLAVILLTPMIV) form a helical membrane-spanning segment. Topologically, residues 36 to 129 (QTESTLKIRP…VFRSNQQNLG (94 aa)) are periplasmic.

The protein belongs to the MzrA family. In terms of assembly, interacts with EnvZ.

The protein localises to the cell inner membrane. Functionally, modulates the activity of the EnvZ/OmpR two-component regulatory system, probably by directly modulating EnvZ enzymatic activity and increasing stability of phosphorylated OmpR. This is Modulator protein MzrA from Yersinia pestis (strain Pestoides F).